A 181-amino-acid chain; its full sequence is I-Kappa-B like protein C2 (181 aa).

ANK repeat units follow at residues 54–86, 91–121, and 125–154; these read DGKX…DINS, DGNT…DMEI, and ARKT…RCDV.

It belongs to the polydnaviridae I-Kappa-B-like protein family.

Its function is as follows. Suppresses the host immune response through NF-kappa-B inactivation. Possesses ankyrin repeat domains required for NF-kappa-B binding but lacks the regulatory regions required for dissociation from NF-kappa-B and degradation. Therefore, prevents host NF-kappa-B release and subsequent activation. The polypeptide is I-Kappa-B like protein C2 (C2) (Microplitis demolitor (Parasitoid wasp)).